Consider the following 339-residue polypeptide: Ketol-acid reductoisomerase (NADP(+)) (339 aa).

Residues 1–182 (MRVYYDRDAD…GGGRAGIIET (182 aa)) enclose the KARI N-terminal Rossmann domain. NADP(+)-binding positions include 24-27 (YGSQ), Arg48, Ser51, Thr53, and 83-86 (DELQ). The active site involves His108. Position 134 (Gly134) interacts with NADP(+). The KARI C-terminal knotted domain maps to 183-328 (TFKEECETDL…AELRAMMPWI (146 aa)). Mg(2+) contacts are provided by Asp191, Glu195, Glu227, and Glu231. Ser252 contributes to the substrate binding site.

Belongs to the ketol-acid reductoisomerase family. The cofactor is Mg(2+).

The enzyme catalyses (2R)-2,3-dihydroxy-3-methylbutanoate + NADP(+) = (2S)-2-acetolactate + NADPH + H(+). It catalyses the reaction (2R,3R)-2,3-dihydroxy-3-methylpentanoate + NADP(+) = (S)-2-ethyl-2-hydroxy-3-oxobutanoate + NADPH + H(+). It participates in amino-acid biosynthesis; L-isoleucine biosynthesis; L-isoleucine from 2-oxobutanoate: step 2/4. The protein operates within amino-acid biosynthesis; L-valine biosynthesis; L-valine from pyruvate: step 2/4. Its function is as follows. Involved in the biosynthesis of branched-chain amino acids (BCAA). Catalyzes an alkyl-migration followed by a ketol-acid reduction of (S)-2-acetolactate (S2AL) to yield (R)-2,3-dihydroxy-isovalerate. In the isomerase reaction, S2AL is rearranged via a Mg-dependent methyl migration to produce 3-hydroxy-3-methyl-2-ketobutyrate (HMKB). In the reductase reaction, this 2-ketoacid undergoes a metal-dependent reduction by NADPH to yield (R)-2,3-dihydroxy-isovalerate. In Beijerinckia indica subsp. indica (strain ATCC 9039 / DSM 1715 / NCIMB 8712), this protein is Ketol-acid reductoisomerase (NADP(+)).